The primary structure comprises 194 residues: MLNVLIFGAPGSGKGTQSEELIRRYGFRHISTGELLRAEIKAQTELGQAAAGYINEGHLVPDSLIVDMMEKLISTLVDTEGIIFDGFPRTIPQAEAMETMLAHHGWKVDIVLNLQVPEEMLIERLLNRGKISGRSDDNIETIRKRLDVYANETAPLVDFFTRKNVLHNVVGTGTIEEIALRIAPIVDKFRKVSN.

11-16 (GSGKGT) contributes to the ATP binding site. Residues 31–60 (STGELLRAEIKAQTELGQAAAGYINEGHLV) form an NMP region. AMP contacts are provided by residues T32, R37, 58 to 60 (HLV), 86 to 89 (GFPR), and Q93. Residues 127–137 (NRGKISGRSDD) form an LID region. Position 128 (R128) interacts with ATP. 2 residues coordinate AMP: R134 and R145. ATP is bound at residue G173.

Belongs to the adenylate kinase family. Monomer.

Its subcellular location is the cytoplasm. The enzyme catalyses AMP + ATP = 2 ADP. It functions in the pathway purine metabolism; AMP biosynthesis via salvage pathway; AMP from ADP: step 1/1. Functionally, catalyzes the reversible transfer of the terminal phosphate group between ATP and AMP. Plays an important role in cellular energy homeostasis and in adenine nucleotide metabolism. This Porphyromonas gingivalis (strain ATCC 33277 / DSM 20709 / CIP 103683 / JCM 12257 / NCTC 11834 / 2561) protein is Adenylate kinase.